Here is a 185-residue protein sequence, read N- to C-terminus: MINEIKKDAQERMKKSLESLAHAFGQIRTGKAHPSILGSVMVPYYGTDTPLSGVANVTVKDSQTLQVVPFERNMLGAIDKAIGSAGLNLNPTNLGELLLIKMAPLTEETRKGFTKQARAAAEDARVAVRNIRRDALGELKKLTKDKEISEDEERRGSAEIDKLIKDFEAQIAKATEEKEKDLMAV.

Belongs to the RRF family.

Its subcellular location is the cytoplasm. In terms of biological role, responsible for the release of ribosomes from messenger RNA at the termination of protein biosynthesis. May increase the efficiency of translation by recycling ribosomes from one round of translation to another. This chain is Ribosome-recycling factor, found in Pseudomonas fluorescens (strain ATCC BAA-477 / NRRL B-23932 / Pf-5).